Here is a 312-residue protein sequence, read N- to C-terminus: MASGNCTTPTTFILSGLTDNPGLQMPLFMVFLAIYTITLLTNLGLIALISIDLQLQTPMYIFLQNLSFTDAVYSTVITPKMLATFLEETKTISYVGCILQYFSFVLLTVRECLLLAVMAYDRYAAICKPLLYPAIMTKAVCWRLVKGLYSLAFLNFLVHTSGLLKLSFCSSNVVNHFFCDNSPLFQISSSSTALNELLVFIFGSLFVMSSIITILISYVFIILTVVRIRSKERKYKAFSTCTSHLMAVSLFHGTIVFMYFQPANNFSLDKDKIMSLFYTVVIPMLNPLIYSWRNKEVKDALHRAIATAVLFH.

Residues 1–26 are Extracellular-facing; the sequence is MASGNCTTPTTFILSGLTDNPGLQMP. N-linked (GlcNAc...) asparagine glycosylation occurs at Asn-5. The helical transmembrane segment at 27 to 49 threads the bilayer; sequence LFMVFLAIYTITLLTNLGLIALI. The Cytoplasmic portion of the chain corresponds to 50 to 57; the sequence is SIDLQLQT. A helical transmembrane segment spans residues 58 to 79; sequence PMYIFLQNLSFTDAVYSTVITP. Over 80–100 the chain is Extracellular; sequence KMLATFLEETKTISYVGCILQ. An intrachain disulfide couples Cys-97 to Cys-179. Residues 101–120 form a helical membrane-spanning segment; it reads YFSFVLLTVRECLLLAVMAY. Residues 121-139 are Cytoplasmic-facing; that stretch reads DRYAAICKPLLYPAIMTKA. A helical membrane pass occupies residues 140-164; it reads VCWRLVKGLYSLAFLNFLVHTSGLL. Over 165–205 the chain is Extracellular; sequence KLSFCSSNVVNHFFCDNSPLFQISSSSTALNELLVFIFGSL. Residues 206-226 traverse the membrane as a helical segment; that stretch reads FVMSSIITILISYVFIILTVV. At 227–239 the chain is on the cytoplasmic side; the sequence is RIRSKERKYKAFS. A helical membrane pass occupies residues 240–260; that stretch reads TCTSHLMAVSLFHGTIVFMYF. The Extracellular portion of the chain corresponds to 261-271; that stretch reads QPANNFSLDKD. A helical membrane pass occupies residues 272-292; the sequence is KIMSLFYTVVIPMLNPLIYSW. At 293 to 312 the chain is on the cytoplasmic side; that stretch reads RNKEVKDALHRAIATAVLFH.

It belongs to the G-protein coupled receptor 1 family.

The protein localises to the cell membrane. Odorant receptor. The polypeptide is Olfactory receptor-like protein COR6 (COR6) (Gallus gallus (Chicken)).